The following is a 119-amino-acid chain: Large ribosomal subunit protein uL18 (119 aa).

The protein belongs to the universal ribosomal protein uL18 family. As to quaternary structure, part of the 50S ribosomal subunit; part of the 5S rRNA/L5/L18/L25 subcomplex. Contacts the 5S and 23S rRNAs.

In terms of biological role, this is one of the proteins that bind and probably mediate the attachment of the 5S RNA into the large ribosomal subunit, where it forms part of the central protuberance. The sequence is that of Large ribosomal subunit protein uL18 from Clostridium beijerinckii (strain ATCC 51743 / NCIMB 8052) (Clostridium acetobutylicum).